A 20-amino-acid polypeptide reads, in one-letter code: Cuticle-degrading protease-like protein (20 aa).

Residues 1 to 20 (AIVEQQGAPXGLGRIINKXK) are disordered.

Belongs to the peptidase S8 family.

The protein localises to the secreted. In terms of biological role, capable of breaching the insect cuticle. In Metacordyceps chlamydosporia (Nematophagous fungus), this protein is Cuticle-degrading protease-like protein.